The primary structure comprises 405 residues: S-adenosylmethionine synthase (405 aa).

His22 lines the ATP pocket. Asp24 serves as a coordination point for Mg(2+). K(+) is bound at residue Glu50. 2 residues coordinate L-methionine: Glu63 and Gln107. Residues 107 to 117 (QSPDIAQGVNR) are flexible loop. ATP-binding positions include 184–186 (DGK), 250–251 (RF), Asp259, 265–266 (RK), Ala282, and Lys286. Asp259 is a binding site for L-methionine. Residue Lys290 participates in L-methionine binding.

This sequence belongs to the AdoMet synthase family. As to quaternary structure, homotetramer; dimer of dimers. It depends on Mg(2+) as a cofactor. Requires K(+) as cofactor.

The protein resides in the cytoplasm. The catalysed reaction is L-methionine + ATP + H2O = S-adenosyl-L-methionine + phosphate + diphosphate. It participates in amino-acid biosynthesis; S-adenosyl-L-methionine biosynthesis; S-adenosyl-L-methionine from L-methionine: step 1/1. Functionally, catalyzes the formation of S-adenosylmethionine (AdoMet) from methionine and ATP. The overall synthetic reaction is composed of two sequential steps, AdoMet formation and the subsequent tripolyphosphate hydrolysis which occurs prior to release of AdoMet from the enzyme. In Roseiflexus castenholzii (strain DSM 13941 / HLO8), this protein is S-adenosylmethionine synthase.